Reading from the N-terminus, the 374-residue chain is Lactoyl-CoA dehydratase subunit beta (374 aa).

Belongs to the FldB/FldC dehydratase alpha/beta subunit family. Heterodimer of an alpha (LcdA) and a beta (LcdB) subunit. It depends on [4Fe-4S] cluster as a cofactor. The cofactor is FMN. Requires riboflavin as cofactor. Mg(2+) is required as a cofactor.

It catalyses the reaction (R)-lactoyl-CoA = acryloyl-CoA + H2O. The enzyme catalyses (2R)-hydroxybutanoyl-CoA = (2E)-butenoyl-CoA + H2O. Activated by the LcdC protein. Functionally, involved in the acrylate pathway for the conversion of D-lactic acid to propionic acid. Catalyzes the reversible dehydration of Lactoyl-CoA and 2-hydroxybutyroyl-CoA to acryloyl-CoA and crotonyl-CoA, respectively. The sequence is that of Lactoyl-CoA dehydratase subunit beta (lcdB) from Anaerotignum propionicum (Clostridium propionicum).